The sequence spans 522 residues: Amphoterin-induced protein 2 (522 aa).

A signal peptide spans 1–39 (MSLRVHTLPTLLGAVVRPGCRELLCLLMITVAVGPGASG). An LRRNT domain is found at 40–68 (VCPTACICATDIVSCTNKHLSKVPGNLFR). The Extracellular segment spans residues 40–398 (VCPTACICAT…RSHAHEAFNT (359 aa)). 2 cysteine pairs are disulfide-bonded: Cys-41/Cys-47 and Cys-45/Cys-54. 6 LRR repeats span residues 69 to 90 (LMKR…WIPV), 94 to 115 (KLNT…SFST), 118 to 139 (NLKC…VFQE), 142 to 163 (VLEV…AFGG), 166 to 187 (QLQK…LYVG), and 193 to 214 (ELMF…HINL). N-linked (GlcNAc...) asparagine glycosylation is present at Asn-104. The LRRCT domain maps to 228–284 (NPFVCDCSLYSLLVFWYRRHFSSVMDFKNDYTCRLWSDSRHSRQVLLLQDSFMNCSD). Intrachain disulfides connect Cys-232–Cys-260 and Cys-234–Cys-282. N-linked (GlcNAc...) asparagine glycans are attached at residues Asn-281, Asn-288, Asn-345, Asn-373, Asn-381, and Asn-384. The region spanning 289-379 (GSFRALGFIH…RLLNETVDVT (91 aa)) is the Ig-like C2-type domain. A disulfide bond links Cys-310 and Cys-363. A helical membrane pass occupies residues 399–419 (AFTTLAACVASIVLVLLYLYL). The Cytoplasmic segment spans residues 420 to 522 (TPCPCKCKTK…FSDTPFVAST (103 aa)). A disordered region spans residues 501–522 (RGKSDSDSVNSVFSDTPFVAST).

Belongs to the immunoglobulin superfamily. AMIGO family. Binds itself as well as AMIGO1 and AMIGO3.

The protein resides in the cell membrane. Its subcellular location is the nucleus. Its function is as follows. Required for depolarization-dependent survival of cultured cerebellar granule neurons. May mediate homophilic as well as heterophilic cell-cell interaction with AMIGO1 or AMIGO3. May contribute to signal transduction through its intracellular domain. In Pongo abelii (Sumatran orangutan), this protein is Amphoterin-induced protein 2.